The chain runs to 935 residues: Mannosyltransferase regulator 14 (935 aa).

At 1 to 21 (MMLSLRRFSMYVLRSLRLHFK) the chain is on the cytoplasmic side. Residues 22-42 (KIIITLLTIQLLFITIFVLGG) traverse the membrane as a helical; Signal-anchor for type II membrane protein segment. Residues 43 to 935 (RSSIIDGNWK…NNIFGSDQKY (893 aa)) are Lumenal-facing. Positions 498-500 (DHD) match the DXD motif.

The protein belongs to the MNN4 family.

It localises to the golgi apparatus membrane. In terms of biological role, plays a role in N-glycan mannosylphosphorylation and has partially redundant function with MNN4. The sequence is that of Mannosyltransferase regulator 14 from Saccharomyces cerevisiae (strain ATCC 204508 / S288c) (Baker's yeast).